A 149-amino-acid polypeptide reads, in one-letter code: Ribonuclease H (149 aa).

One can recognise an RNase H type-1 domain in the interval 1–145 (MKKVIIYTDG…CDKLANEAMD (145 aa)). 4 residues coordinate Mg(2+): Asp9, Glu50, Asp72, and Asp137.

Belongs to the RNase H family. Monomer. It depends on Mg(2+) as a cofactor.

It localises to the cytoplasm. It catalyses the reaction Endonucleolytic cleavage to 5'-phosphomonoester.. Endonuclease that specifically degrades the RNA of RNA-DNA hybrids. The polypeptide is Ribonuclease H (Clostridium botulinum (strain ATCC 19397 / Type A)).